A 506-amino-acid chain; its full sequence is Anaerobic nitric oxide reductase transcription regulator NorR (506 aa).

Asp-57 carries the post-translational modification 4-aspartylphosphate. Residues 187-416 enclose the Sigma-54 factor interaction domain; sequence MIGLSPAMTQ…LEHAIHRAVV (230 aa). ATP contacts are provided by residues 215-222 and 278-287; these read GETGTGKE and ADNGTLFLDE. The segment at residues 481-500 is a DNA-binding region (H-T-H motif); it reads WAASARALETDVANLHRLAK.

Its pathway is nitrogen metabolism; nitric oxide reduction. Functionally, required for the expression of anaerobic nitric oxide (NO) reductase, acts as a transcriptional activator for at least the norVW operon. Activation also requires sigma-54. This Salmonella arizonae (strain ATCC BAA-731 / CDC346-86 / RSK2980) protein is Anaerobic nitric oxide reductase transcription regulator NorR.